Here is a 205-residue protein sequence, read N- to C-terminus: Lipoprotein MlpB (205 aa).

An N-terminal signal peptide occupies residues 1–17; it reads MKIINILFCLLLIVLNS. Cys18 carries N-palmitoyl cysteine lipidation. Residue Cys18 is the site of S-diacylglycerol cysteine attachment.

The protein belongs to the Multicopy lipoprotein (Mlp) family.

It is found in the cell outer membrane. Functionally, an outer membrane protein that may participate in pathogenesis. Some human Lyme disease patients have antibodies against this protein. The Mlp proteins probably undergo intragenic recombination, generating new alleles. This is Lipoprotein MlpB from Borreliella burgdorferi (strain ATCC 35210 / DSM 4680 / CIP 102532 / B31) (Borrelia burgdorferi).